We begin with the raw amino-acid sequence, 580 residues long: Rho guanine nucleotide exchange factor 25 (580 aa).

A compositionally biased stretch (low complexity) spans 48–67 (AASGLAAPSGPSSGLSSGPC). 2 disordered regions span residues 48 to 76 (AASGLAAPSGPSSGLSSGPCSPGPPGPVS) and 128 to 157 (LEGPGDKTQPPEEETLSQAPESEEEQKKKA). In terms of domain architecture, DH spans 160 to 336 (RSMYVLSELV…CFVPKRCNDM (177 aa)). Residues 278 to 299 (LGHRLQLNDLLIKPVQRIMKYQ) form an important for binding to Rho GTPases region. The region spanning 348 to 466 (KLTAQGKLLG…WIKHVAQILE (119 aa)) is the PH domain. The sufficient to bind activated GNAQ stretch occupies residues 467–493 (SQRDFLNALQSPIEYQRRESQTNSLGR). 2 disordered regions span residues 482-524 (QRRE…GSLP) and 545-580 (ALGDIPQAPHDSPPVSPTPKTPPCQARLAKLDEDEL). Residues 509-520 (DQAQGSTHTPIN) are compositionally biased toward polar residues. Pro residues predominate over residues 555 to 566 (DSPPVSPTPKTP).

In terms of assembly, interacts (via the DH domain) with POPDC1 (via the C-terminus cytoplasmic tail). Interacts with activated GNAQ and GNA11. Interacts with RHOA, CDC42 and RAC1. Isoform 1 and isoform 2 are highly expressed in excitable tissues, such as brain, heart and muscle. Also detected in kidney and liver.

It localises to the cell membrane. The protein localises to the cytoplasm. The protein resides in the myofibril. Its subcellular location is the sarcomere. May play a role in actin cytoskeleton reorganization in different tissues since its activation induces formation of actin stress fibers. It works as a guanine nucleotide exchange factor for Rho family of small GTPases. Links specifically G alpha q/11-coupled receptors to RHOA activation. May be an important regulator of processes involved in axon and dendrite formation. In neurons seems to be an exchange factor primarily for RAC1. Involved in skeletal myogenesis. The chain is Rho guanine nucleotide exchange factor 25 (ARHGEF25) from Homo sapiens (Human).